The chain runs to 1298 residues: DNA repair protein rad-50 (1298 aa).

ATP is bound by residues Arg-13, Asn-38, Gly-39, Gly-41, Lys-42, Thr-43, Thr-44, Ile-66, and Gln-158. Position 43 (Thr-43) interacts with Mg(2+). Mg(2+) is bound at residue Gln-158. 3 coiled-coil regions span residues 222-291 (ARQN…IRVE), 317-598 (EERA…QYRK), and 622-660 (AEEV…IEES). Positions 622–719 (AEEVSEKLEN…EEIIIVKAEG (98 aa)) constitute a Zinc-hook domain. Zn(2+) contacts are provided by Cys-666 and Cys-669. Coiled-coil stretches lie at residues 691–719 (LSFP…KAEG) and 754–1092 (KNEK…KESI).

Belongs to the SMC family. RAD50 subfamily. Component of the MRN complex composed of two heterodimers rad-50 and mre-11 associated with a single nbs-1. Zn(2+) is required as a cofactor.

The protein localises to the nucleus. It localises to the chromosome. It catalyses the reaction ATP + H2O = ADP + phosphate + H(+). Functionally, component of the MRN complex, which plays a central role in double-strand break (DSB) repair, DNA recombination, maintenance of telomere integrity and meiosis. The MRN complex is involved in the repair of DNA double-strand breaks (DSBs) via homologous recombination (HR), an error-free mechanism which primarily occurs during S and G2 phases. The complex (1) mediates the end resection of damaged DNA, which generates proper single-stranded DNA, a key initial steps in HR, and is (2) required for the recruitment of other repair factors and efficient activation of ATM and ATR upon DNA damage. The MRN complex possesses single-strand endonuclease activity and double-strand-specific 3'-5' exonuclease activity, which are provided by mre-11, to initiate end resection, which is required for single-strand invasion and recombination. Within the complex, rad-50 is both required to bind DNA ends and hold them in close proximity and regulate the activity of mre-11. Rad-50 provides an ATP-dependent control of mre-11 by positioning DNA ends into the mre-11 active site: ATP-binding induces a large structural change from an open form with accessible mre-11 nuclease sites into a closed form. This Caenorhabditis elegans protein is DNA repair protein rad-50 (rad-50).